A 335-amino-acid chain; its full sequence is COP9 signalosome complex subunit 5 (335 aa).

The region spanning 51-187 (VRISAVALLK…IGAFRTFPKD (137 aa)) is the MPN domain. The Zn(2+) site is built by histidine 134, histidine 136, and aspartate 147. The JAMM motif motif lies at 134 to 147 (HSHPGYGCWLSGID).

This sequence belongs to the peptidase M67A family. CSN5 subfamily. In terms of assembly, component of the COP9 signalosome (CSN) complex.

Its subcellular location is the cytoplasm. The protein resides in the nucleus. Its function is as follows. Catalytic component of the COP9 signalosome (CSN) complex that acts as an regulator of the ubiquitin (Ubl) conjugation pathway by mediating the deneddylation of the cullin subunit of SCF-type E3 ubiquitin-protein ligase complexes. The CSN complex seems to link protein degradation to sexual development. Required for fruit body formation. This is COP9 signalosome complex subunit 5 (rri1) from Emericella nidulans (strain FGSC A4 / ATCC 38163 / CBS 112.46 / NRRL 194 / M139) (Aspergillus nidulans).